The following is a 460-amino-acid chain: UDP-N-acetylmuramoylalanine--D-glutamate ligase (460 aa).

Residue 120–126 (GSNGKTT) coordinates ATP.

Belongs to the MurCDEF family.

It localises to the cytoplasm. The catalysed reaction is UDP-N-acetyl-alpha-D-muramoyl-L-alanine + D-glutamate + ATP = UDP-N-acetyl-alpha-D-muramoyl-L-alanyl-D-glutamate + ADP + phosphate + H(+). The protein operates within cell wall biogenesis; peptidoglycan biosynthesis. Functionally, cell wall formation. Catalyzes the addition of glutamate to the nucleotide precursor UDP-N-acetylmuramoyl-L-alanine (UMA). The chain is UDP-N-acetylmuramoylalanine--D-glutamate ligase from Lactobacillus delbrueckii subsp. bulgaricus (strain ATCC BAA-365 / Lb-18).